The sequence spans 359 residues: Transaldolase (359 aa).

Lys-139 (schiff-base intermediate with substrate) is an active-site residue.

Belongs to the transaldolase family. Type 2 subfamily.

The protein resides in the cytoplasm. It catalyses the reaction D-sedoheptulose 7-phosphate + D-glyceraldehyde 3-phosphate = D-erythrose 4-phosphate + beta-D-fructose 6-phosphate. Its pathway is carbohydrate degradation; pentose phosphate pathway; D-glyceraldehyde 3-phosphate and beta-D-fructose 6-phosphate from D-ribose 5-phosphate and D-xylulose 5-phosphate (non-oxidative stage): step 2/3. Its function is as follows. Transaldolase is important for the balance of metabolites in the pentose-phosphate pathway. This is Transaldolase from Thiobacillus denitrificans (strain ATCC 25259 / T1).